A 189-amino-acid chain; its full sequence is Elongation factor P (189 aa).

Lys-34 is modified (N6-(3,6-diaminohexanoyl)-5-hydroxylysine).

Belongs to the elongation factor P family. Post-translationally, may be beta-lysylated on the epsilon-amino group of Lys-34 by the combined action of EpmA and EpmB, and then hydroxylated on the C5 position of the same residue by EpmC (if this protein is present). Lysylation is critical for the stimulatory effect of EF-P on peptide-bond formation. The lysylation moiety may extend toward the peptidyltransferase center and stabilize the terminal 3-CCA end of the tRNA. Hydroxylation of the C5 position on Lys-34 may allow additional potential stabilizing hydrogen-bond interactions with the P-tRNA.

Its subcellular location is the cytoplasm. Its pathway is protein biosynthesis; polypeptide chain elongation. Functionally, involved in peptide bond synthesis. Alleviates ribosome stalling that occurs when 3 or more consecutive Pro residues or the sequence PPG is present in a protein, possibly by augmenting the peptidyl transferase activity of the ribosome. Modification of Lys-34 is required for alleviation. The sequence is that of Elongation factor P from Buchnera aphidicola subsp. Baizongia pistaciae (strain Bp).